Consider the following 697-residue polypeptide: MNINLDTAKDTLCKNILIYGYCKYENKGCAFSHNRQQPAQQQQATNTSNNSTSVITPNSANSTASSADLSSKKKFNLNTPSFQPSVSNLSNKFSTLSPKLKEIPVFKPENGVSEPDTVDSPTTQRPFTSKRFNVSTPSFTPTNFDFANNSNADGNRGGASTPIGISSAPLVQNQQQQQQQQQQQQKQPLAVPSPLASGAQPPTMQHRILSMGVSQSSPSTNPYFANNLDMSAPTPGSETPGPVLPGSAGAAAAAANQPMYPLQYHLYAPAPPPRLTIPLQPYETNSQAMFIPNDLREYLHKKNEASLQSLSHSNLPEHVNQYHSLVPIDKSYEPVSKLWLGKNSLIFKCLDNIDGNLYVMRKIEPCNEIINEKPFKTIKRWKSIKNANIVGLQDAFTTMAFNGNQSGNTSLCIIYDYYPNSISLLEHHKKGLRVEPVNEALLWNYLIQLINAIMAIHEKGLSASSTIDLSKIIVTNKNRIKLSSVGISDILEFKDDETNQDIKIRQLQDIQKVGKVLMELAILLLPVNMRQSNNIYNSLKASTNLSEEIINNLQELNDLDTASGEFDLNEFSQRLTPKMFNIIDSLQNSSDFIEGQLTSELENARLFRLMTKLNYLIHDNSNSENDKIIKLFLNYVYNCYDSNNKKVINLNKVLINLNKLDCGIDEKILLVNNDECIIISYKELKEIIDTKFRLMRE.

The C3H1-type zinc-finger motif lies at 7-36 (TAKDTLCKNILIYGYCKYENKGCAFSHNRQ). Residues 40–67 (QQQQATNTSNNSTSVITPNSANSTASSA) are disordered. Short sequence motifs (PABPC-interacting motif-2 (PAM-2)) lie at residues 69–89 (LSSK…VSNL) and 106–126 (FKPE…TQRP). Residues 106 to 240 (FKPENGVSEP…SAPTPGSETP (135 aa)) form a disordered region. The span at 119–153 (DSPTTQRPFTSKRFNVSTPSFTPTNFDFANNSNAD) shows a compositional bias: polar residues. Positions 172-187 (QNQQQQQQQQQQQQKQ) are enriched in low complexity. A compositionally biased stretch (polar residues) spans 212 to 224 (GVSQSSPSTNPYF). The pseudokinase domain stretch occupies residues 308–576 (QSLSHSNLPE…DLNEFSQRLT (269 aa)). ATP-binding positions include Arg361, 416–423 (DYYPNSIS), and 470–471 (SK). A coiled-coil region spans residues 577 to 615 (PKMFNIIDSLQNSSDFIEGQLTSELENARLFRLMTKLNY). The tract at residues 616-697 (LIHDNSNSEN…IDTKFRLMRE (82 aa)) is knob domain.

Belongs to the protein kinase superfamily. PAN3 family. As to quaternary structure, homodimer. Forms a heterotrimer with a catalytic subunit PAN2 to form the poly(A)-nuclease (PAN) deadenylation complex. Interacts (via PAM-2 motif) with poly(A)-binding protein PAB1 (via PABC domain), conferring substrate specificity of the enzyme complex.

Its subcellular location is the cytoplasm. Functionally, regulatory subunit of the poly(A)-nuclease (PAN) deadenylation complex, one of two cytoplasmic mRNA deadenylases involved in mRNA turnover. PAN specifically shortens poly(A) tails of RNA and the activity is stimulated by poly(A)-binding protein PAB1. PAN deadenylation is followed by rapid degradation of the shortened mRNA tails by the CCR4-NOT complex. Deadenylated mRNAs are then degraded by two alternative mechanisms, namely exosome-mediated 3'-5' exonucleolytic degradation, or deadenylation-dependent mRNA decaping and subsequent 5'-3' exonucleolytic degradation by XRN1. May also be involved in post-transcriptional maturation of mRNA poly(A) tails. PAN3 acts as a positive regulator for PAN activity, recruiting the catalytic subunit PAN2 to mRNA via its interaction with RNA and with PAB1. In Candida albicans (strain SC5314 / ATCC MYA-2876) (Yeast), this protein is PAN2-PAN3 deadenylation complex subunit PAN3.